The primary structure comprises 791 residues: Probable phosphoketolase (791 aa).

The protein belongs to the XFP family. The cofactor is thiamine diphosphate.

This chain is Probable phosphoketolase, found in Chlorobaculum tepidum (strain ATCC 49652 / DSM 12025 / NBRC 103806 / TLS) (Chlorobium tepidum).